Here is a 715-residue protein sequence, read N- to C-terminus: Fatty acid oxidation complex subunit alpha (715 aa).

The segment at 1–189 (MIYQGETLTV…KVGAIDAVVA (189 aa)) is enoyl-CoA hydratase/isomerase. Asp296 is a substrate binding site. Residues 311–715 (AKATSHAAVL…EMAAQGKTFY (405 aa)) form a 3-hydroxyacyl-CoA dehydrogenase region. NAD(+) contacts are provided by residues Met325, Asp344, 401 to 403 (VVE), Lys408, and Ser430. His451 serves as the catalytic For 3-hydroxyacyl-CoA dehydrogenase activity. Asn454 contributes to the NAD(+) binding site. Substrate contacts are provided by Asn501 and Tyr661.

It in the N-terminal section; belongs to the enoyl-CoA hydratase/isomerase family. The protein in the C-terminal section; belongs to the 3-hydroxyacyl-CoA dehydrogenase family. In terms of assembly, heterotetramer of two alpha chains (FadB) and two beta chains (FadA).

It catalyses the reaction a (3S)-3-hydroxyacyl-CoA + NAD(+) = a 3-oxoacyl-CoA + NADH + H(+). The enzyme catalyses a (3S)-3-hydroxyacyl-CoA = a (2E)-enoyl-CoA + H2O. It carries out the reaction a 4-saturated-(3S)-3-hydroxyacyl-CoA = a (3E)-enoyl-CoA + H2O. The catalysed reaction is (3S)-3-hydroxybutanoyl-CoA = (3R)-3-hydroxybutanoyl-CoA. It catalyses the reaction a (3Z)-enoyl-CoA = a 4-saturated (2E)-enoyl-CoA. The enzyme catalyses a (3E)-enoyl-CoA = a 4-saturated (2E)-enoyl-CoA. It functions in the pathway lipid metabolism; fatty acid beta-oxidation. In terms of biological role, involved in the aerobic and anaerobic degradation of long-chain fatty acids via beta-oxidation cycle. Catalyzes the formation of 3-oxoacyl-CoA from enoyl-CoA via L-3-hydroxyacyl-CoA. It can also use D-3-hydroxyacyl-CoA and cis-3-enoyl-CoA as substrate. The polypeptide is Fatty acid oxidation complex subunit alpha (Aeromonas hydrophila subsp. hydrophila (strain ATCC 7966 / DSM 30187 / BCRC 13018 / CCUG 14551 / JCM 1027 / KCTC 2358 / NCIMB 9240 / NCTC 8049)).